Here is a 113-residue protein sequence, read N- to C-terminus: MDKKDLFDQITEVTRNTEDLLNKLHETQSAMVEIMEENAELQIENQHLRERLKQATAAENEGTKNTKYGLSKSLQNLEKLYASGYHVCNEFYGKHRQDEEECAFCLTVIYGDR.

The Zn(2+) site is built by histidine 86, cysteine 88, cysteine 102, and cysteine 105.

Belongs to the YabA family. In terms of assembly, homotetramer. Interacts with both DnaA and DnaN, acting as a bridge between these two proteins. Zn(2+) is required as a cofactor.

The protein localises to the cytoplasm. It is found in the nucleoid. Involved in control of chromosome replication initiation. Inhibits the cooperative binding of DnaA to the oriC region, thus negatively regulating initiation of chromosome replication. Inhibits the ability of DnaA-ATP to form a helix on DNA; does not disassemble preformed DnaA-DNA helices. Decreases the residence time of DnaA on the chromosome at its binding sites (oriC, replication forks and promoter-binding sites). Tethers DnaA to the replication machinery via the DNA polymerase beta sliding clamp subunit (dnaN). Associates with oriC and other DnaA targets on the chromosome in a DnaA-dependent manner. This is Replication initiation control protein YabA from Pediococcus pentosaceus (strain ATCC 25745 / CCUG 21536 / LMG 10740 / 183-1w).